We begin with the raw amino-acid sequence, 142 residues long: Large ribosomal subunit protein uL13 (142 aa).

It belongs to the universal ribosomal protein uL13 family. In terms of assembly, part of the 50S ribosomal subunit.

This protein is one of the early assembly proteins of the 50S ribosomal subunit, although it is not seen to bind rRNA by itself. It is important during the early stages of 50S assembly. This chain is Large ribosomal subunit protein uL13, found in Actinobacillus pleuropneumoniae serotype 5b (strain L20).